The sequence spans 433 residues: MLNRGTFQVFRGISGPPKKSVDLPKYDLVIVGGGIVGCATARQLLIEKPQLKVALIEKEKELAVHQSGHNSGVIHAGIYYTPGSLKAKLCVEGLDLSYEFFDKEKVPYKKTGKLIVAVEPEEVPRLDALFSRAQTNGCRDIEMIDSSKITELEPHCRGLKALWSPHTGIVDWGYVTKRFGEDFEKRGGKIYTSYPLEKISDNHDPGYPIRVSSGPALAEFETKNLITCAGLQSDRVAALSGCSTDPKIVPFRGEYLLLKPEKRHLVKTNIYPVPDPRFPFLGVHFTPRMNGDIWLGPNAVLAYKREGYSYFSISPSDLLESLSYSGMQKLVKKHFTFGIKELYRGVWIAAQVKQLQRFIPELKLSDVTRGPAGVRAQAMDSAGNLVDDFVFDSGTGKLSPLLMHVRNAPSPAATSSLAIAKMITSEAINRFKL.

This sequence belongs to the L2HGDH family. FAD is required as a cofactor.

The protein resides in the mitochondrion. It catalyses the reaction (S)-2-hydroxyglutarate + A = 2-oxoglutarate + AH2. In Caenorhabditis elegans, this protein is L-2-hydroxyglutarate dehydrogenase, mitochondrial.